The sequence spans 429 residues: Histidine--tRNA ligase (429 aa).

This sequence belongs to the class-II aminoacyl-tRNA synthetase family. In terms of assembly, homodimer.

Its subcellular location is the cytoplasm. The enzyme catalyses tRNA(His) + L-histidine + ATP = L-histidyl-tRNA(His) + AMP + diphosphate + H(+). In Pseudomonas putida (strain GB-1), this protein is Histidine--tRNA ligase.